The sequence spans 968 residues: Alanine--tRNA ligase, cytoplasmic (968 aa).

N-acetylmethionine is present on M1. Phosphoserine occurs at positions 3 and 8. An N6-acetyllysine modification is found at K19. ATP contacts are provided by residues R77, H95, W176, and 214-216 (IWN). L-alanine contacts are provided by N216 and D239. G243 contributes to the ATP binding site. Residues S399 and S555 each carry the phosphoserine modification. Positions 605, 609, 723, and 727 each coordinate Zn(2+). Residues 750 to 763 (RRIVAVTGAEAQKA) carry the Nuclear localization signal motif. K876 is subject to N6-acetyllysine. Position 943 is an N6,N6,N6-trimethyllysine; alternate (K943). K943 is modified (N6,N6-dimethyllysine; alternate). Residue K943 is modified to N6-methyllysine; alternate.

Belongs to the class-II aminoacyl-tRNA synthetase family. In terms of assembly, monomer. Interacts with ANKRD16; the interaction is direct. Zn(2+) serves as cofactor. In terms of processing, ISGylated. Methylation at 'Lys-943' by METTL21C.

The protein resides in the cytoplasm. The protein localises to the nucleus. The enzyme catalyses tRNA(Ala) + L-alanine + ATP = L-alanyl-tRNA(Ala) + AMP + diphosphate. It catalyses the reaction (S)-lactate + ATP + H(+) = (S)-lactoyl-AMP + diphosphate. The catalysed reaction is (S)-lactoyl-AMP + L-lysyl-[protein] = N(6)-[(S)-lactoyl]-L-lysyl-[protein] + AMP + 2 H(+). Its activity is regulated as follows. The protein lactyltransferase activity is inhibited by beta-alanine. Functionally, catalyzes the attachment of alanine to tRNA(Ala) in a two-step reaction: alanine is first activated by ATP to form Ala-AMP and then transferred to the acceptor end of tRNA(Ala). Also edits incorrectly charged tRNA(Ala) via its editing domain. In presence of high levels of lactate, also acts as a protein lactyltransferase that mediates lactylation of lysine residues in target proteins, such as TEAD1, TP53/p53 and YAP1. Protein lactylation takes place in a two-step reaction: lactate is first activated by ATP to form lactate-AMP and then transferred to lysine residues of target proteins. Acts as an inhibitor of TP53/p53 activity by catalyzing lactylation of TP53/p53. Acts as a positive regulator of the Hippo pathway by mediating lactylation of TEAD1 and YAP1. This chain is Alanine--tRNA ligase, cytoplasmic (AARS1), found in Pongo abelii (Sumatran orangutan).